The chain runs to 86 residues: Small ribosomal subunit protein bS20 (86 aa).

Belongs to the bacterial ribosomal protein bS20 family.

Functionally, binds directly to 16S ribosomal RNA. The polypeptide is Small ribosomal subunit protein bS20 (Rhodococcus erythropolis (strain PR4 / NBRC 100887)).